We begin with the raw amino-acid sequence, 71 residues long: ATP synthase subunit c (71 aa).

2 helical membrane passes run 5–25 (VLAA…IGIA) and 46–66 (FFIL…VMAF).

The protein belongs to the ATPase C chain family. In terms of assembly, F-type ATPases have 2 components, F(1) - the catalytic core - and F(0) - the membrane proton channel. F(1) has five subunits: alpha(3), beta(3), gamma(1), delta(1), epsilon(1). F(0) has three main subunits: a(1), b(2) and c(10-14). The alpha and beta chains form an alternating ring which encloses part of the gamma chain. F(1) is attached to F(0) by a central stalk formed by the gamma and epsilon chains, while a peripheral stalk is formed by the delta and b chains.

The protein localises to the cell membrane. F(1)F(0) ATP synthase produces ATP from ADP in the presence of a proton or sodium gradient. F-type ATPases consist of two structural domains, F(1) containing the extramembraneous catalytic core and F(0) containing the membrane proton channel, linked together by a central stalk and a peripheral stalk. During catalysis, ATP synthesis in the catalytic domain of F(1) is coupled via a rotary mechanism of the central stalk subunits to proton translocation. Functionally, key component of the F(0) channel; it plays a direct role in translocation across the membrane. A homomeric c-ring of between 10-14 subunits forms the central stalk rotor element with the F(1) delta and epsilon subunits. This is ATP synthase subunit c from Clostridium beijerinckii (strain ATCC 51743 / NCIMB 8052) (Clostridium acetobutylicum).